The sequence spans 302 residues: Acetylglutamate kinase (302 aa).

Residues Gly55–Gly56, Arg77, and Asn176 each bind substrate.

It belongs to the acetylglutamate kinase family. ArgB subfamily.

It localises to the cytoplasm. The enzyme catalyses N-acetyl-L-glutamate + ATP = N-acetyl-L-glutamyl 5-phosphate + ADP. Its pathway is amino-acid biosynthesis; L-arginine biosynthesis; N(2)-acetyl-L-ornithine from L-glutamate: step 2/4. Its function is as follows. Catalyzes the ATP-dependent phosphorylation of N-acetyl-L-glutamate. This Corynebacterium efficiens (strain DSM 44549 / YS-314 / AJ 12310 / JCM 11189 / NBRC 100395) protein is Acetylglutamate kinase.